Here is a 268-residue protein sequence, read N- to C-terminus: GTP cyclohydrolase III (268 aa).

The protein belongs to the archaeal-type GTP cyclohydrolase family. As to quaternary structure, homotrimer. Mg(2+) serves as cofactor.

The catalysed reaction is GTP + 3 H2O = 2-amino-5-formylamino-6-(5-phospho-D-ribosylamino)pyrimidin-4(3H)-one + 2 phosphate + 2 H(+). Catalyzes the formation of 2-amino-5-formylamino-6-ribofuranosylamino-4(3H)-pyrimidinone ribonucleotide monophosphate and inorganic phosphate from GTP. Also has an independent pyrophosphate phosphohydrolase activity. The protein is GTP cyclohydrolase III (gch3) of Methanocaldococcus jannaschii (strain ATCC 43067 / DSM 2661 / JAL-1 / JCM 10045 / NBRC 100440) (Methanococcus jannaschii).